The following is a 400-amino-acid chain: MEPVLQARGKRENVLGNAREERCVPGFPSACEQKLEQEKLSGVVKRVHRDLRKKYREAGDFEKIWLEHCKDKGRLCEYAVAMKALADNHWAKKCEGEGRIEWCLGVCQEYFFNGGKKKAIEKDARRATLNKLQSPNHAEDGVSDFSVPNIKPLNDEYMTGKIRLLDVGSCYNPFLKYEDFLAVGIDIVPAVETVCKCDFLNLQIQRPLQFAPDAIDAFLKQLESPIDYLPAELFHVVVFSLLLSYFPSPYQRWICCKKAHELLTLNGLLLIITPDSSHQNRHAVMMKSWKIAIESLGFRRMTYSKFSHMHLMAFRKTSLKTTSDLITMNYPDMLYIPQDFNYDGEEDYFSPCCARSELEDEQLACGFTELPDTPYDSDSGESQNSTMPFYEFEDPILLLT.

Residues R99, G168, D186, D198, F199, and S240 each contribute to the S-adenosyl-L-methionine site.

This sequence belongs to the BMT2/SAMTOR family. In terms of assembly, interacts with the GATOR1 complex; interaction is disrupted when samtor binds S-adenosyl-L-methionine. Interacts with the KICSTOR complex; interaction is disrupted when samtor binds S-adenosyl-L-methionine.

Functionally, S-adenosyl-L-methionine-binding protein that acts as an inhibitor of mTORC1 signaling via interaction with the GATOR1 and KICSTOR complexes. Acts as a sensor of S-adenosyl-L-methionine to signal methionine sufficiency to mTORC1: in presence of methionine, binds S-adenosyl-L-methionine, leading to disrupt interaction with the GATOR1 and KICSTOR complexes and promote mTORC1 signaling. Upon methionine starvation, S-adenosyl-L-methionine levels are reduced, thereby promoting the association with GATOR1 and KICSTOR, leading to inhibit mTORC1 signaling. Probably also acts as a S-adenosyl-L-methionine-dependent methyltransferase. The sequence is that of S-adenosylmethionine sensor upstream of mTORC1 from Xenopus tropicalis (Western clawed frog).